A 118-amino-acid polypeptide reads, in one-letter code: Large ribosomal subunit protein bL20 (118 aa).

It belongs to the bacterial ribosomal protein bL20 family.

Its function is as follows. Binds directly to 23S ribosomal RNA and is necessary for the in vitro assembly process of the 50S ribosomal subunit. It is not involved in the protein synthesizing functions of that subunit. The chain is Large ribosomal subunit protein bL20 from Leptothrix cholodnii (strain ATCC 51168 / LMG 8142 / SP-6) (Leptothrix discophora (strain SP-6)).